A 42-amino-acid polypeptide reads, in one-letter code: Crotamine-IV-3 (42 aa).

Cystine bridges form between C4–C37, C11–C31, and C19–C38.

It belongs to the crotamine-myotoxin family. In terms of assembly, monomer. As to expression, expressed by the venom gland.

It is found in the secreted. Functionally, cationic peptide that possesses multiple functions. It acts as a cell-penetrating peptide (CPP), and as a potent voltage-gated potassium channel (Kv) inhibitor. It exhibits antimicrobial activities, and hind limb paralysis. It also induces potent blockade of neuromuscular transmission in young chicken biventer cervicis preparation and potent myotoxic effect. In mice, it induces myonecrosis, upon intramuscular or subcutaneous injections. The sequence is that of Crotamine-IV-3 from Crotalus durissus cumanensis (South American rattlesnake).